Consider the following 144-residue polypeptide: Large ribosomal subunit protein uL15 (144 aa).

The segment at 1-54 (MRLNTLSPAEGSKKAGKRLGRGIGSGLGKTGGRGHKGQKSRSGGGVRRGFEGGQ) is disordered. The span at 21 to 31 (RGIGSGLGKTG) shows a compositional bias: gly residues.

It belongs to the universal ribosomal protein uL15 family. In terms of assembly, part of the 50S ribosomal subunit.

Functionally, binds to the 23S rRNA. In Escherichia coli (strain K12 / MC4100 / BW2952), this protein is Large ribosomal subunit protein uL15.